The sequence spans 380 residues: Crotonobetainyl-CoA reductase (380 aa).

Belongs to the acyl-CoA dehydrogenase family. As to quaternary structure, homotetramer. Requires FAD as cofactor.

The protein resides in the cytoplasm. It carries out the reaction 4-(trimethylamino)butanoyl-CoA + oxidized [electron-transfer flavoprotein] + H(+) = crotonobetainyl-CoA + reduced [electron-transfer flavoprotein]. The protein operates within amine and polyamine metabolism; carnitine metabolism. Catalyzes the reduction of crotonobetainyl-CoA to gamma-butyrobetainyl-CoA. This Escherichia coli O6:K15:H31 (strain 536 / UPEC) protein is Crotonobetainyl-CoA reductase.